We begin with the raw amino-acid sequence, 459 residues long: E3 ubiquitin-protein ligase RNF14 (459 aa).

The RWD domain occupies 10–129 (DELLALASIY…QFLKEETLDF (120 aa)). The segment at 141–169 (SGSQPQCEPAQKHAADASGEKSKVQDLDP) is disordered. Basic and acidic residues predominate over residues 150–169 (AQKHAADASGEKSKVQDLDP). Positions 200 to 441 (KAFCCGICYS…NPDSPCYNQL (242 aa)) are TRIAD supradomain. Residues cysteine 204, cysteine 207, cysteine 222, histidine 224, cysteine 227, cysteine 230, cysteine 249, cysteine 254, cysteine 293, cysteine 298, cysteine 313, cysteine 316, cysteine 321, cysteine 324, histidine 329, cysteine 334, cysteine 388, and cysteine 391 each coordinate Zn(2+). RING-type zinc fingers lie at residues 204–249 (CGIC…CLNC) and 204–254 (CGIC…EPKC). The IBR-type zinc-finger motif lies at 273–334 (ARYDRLLLQS…RRSYHGLSHC (62 aa)). Residues 388-417 (CPCCGTNIQKAHGCNKMTCSSCQKYFCWIC) form an RING-type 2; atypical zinc finger. Residue cysteine 401 is part of the active site. Zn(2+)-binding residues include cysteine 406, cysteine 409, cysteine 414, cysteine 417, histidine 429, and cysteine 437.

It belongs to the RBR family. RNF14 subfamily.

It localises to the cytoplasm. It is found in the nucleus. It catalyses the reaction [E2 ubiquitin-conjugating enzyme]-S-ubiquitinyl-L-cysteine + [acceptor protein]-L-lysine = [E2 ubiquitin-conjugating enzyme]-L-cysteine + [acceptor protein]-N(6)-ubiquitinyl-L-lysine.. Its pathway is protein modification; protein ubiquitination. E3 ubiquitin-protein ligase that plays a key role in the RNF14-RNF25 translation quality control pathway, a pathway that takes place when a ribosome has stalled during translation, and which promotes ubiquitination and degradation of translation factors on stalled ribosomes. Recruited to stalled ribosomes by the ribosome collision sensor GCN1 and mediates 'Lys-6'-linked ubiquitination of target proteins, leading to their degradation. Mediates ubiquitination of eef1a1/eEF1A and etf1/eRF1 translation factors on stalled ribosomes, leading to their degradation. Specifically required to resolve RNA-protein cross-links caused by reactive aldehydes, which trigger translation stress by stalling ribosomes: acts by catalying 'Lys-6'-linked ubiquitination of RNA-protein cross-links, leading to their removal by the ATP-dependent unfoldase VCP and subsequent degradation by the proteasome. Independently of its function in the response to stalled ribosomes, acts as a regulator of transcription in Wnt signaling via its interaction with TCF transcription factors (tcf7/tcf1, tcf7l1/tcf3 and tcf7l2/tcf4). In Danio rerio (Zebrafish), this protein is E3 ubiquitin-protein ligase RNF14.